The primary structure comprises 522 residues: Putative zinc finger protein 286B (522 aa).

The disordered stretch occupies residues 1 to 30 (METDLAEMPEKGVLSSQDSPHFQEKSTEEG). 10 C2H2-type zinc fingers span residues 244 to 266 (HKCN…QRVH), 272 to 294 (YTCN…QRTH), 299 to 321 (FECR…QRIH), 327 to 349 (YECN…QLIH), 355 to 377 (YECN…QRTH), 383 to 405 (YKCQ…QRVH), 411 to 433 (YECS…QRIH), 439 to 461 (YECS…QRIH), 467 to 489 (YKCS…QRTH), and 495 to 517 (FRCN…QRVH).

It belongs to the krueppel C2H2-type zinc-finger protein family.

The protein resides in the nucleus. May be involved in transcriptional regulation. This is Putative zinc finger protein 286B (ZNF286B) from Homo sapiens (Human).